The primary structure comprises 376 residues: GDSL esterase/lipase At5g55050 (376 aa).

An N-terminal signal peptide occupies residues 1 to 29; sequence MPTNNTPFLTIFLLFLGLLRFDSFPGLEA. The active-site Nucleophile is the Ser-46. 2 N-linked (GlcNAc...) asparagine glycosylation sites follow: Asn-134 and Asn-245. Active-site residues include Asp-340 and His-344.

This sequence belongs to the 'GDSL' lipolytic enzyme family.

The protein resides in the secreted. This chain is GDSL esterase/lipase At5g55050, found in Arabidopsis thaliana (Mouse-ear cress).